The chain runs to 361 residues: Divinyl chlorophyll a/b light-harvesting protein PcbE (361 aa).

6 helical membrane-spanning segments follow: residues 27–47 (FIGS…ANTL), 88–108 (VAFV…AGLL), 149–169 (FILG…VEWA), 210–230 (VMGG…FHIA), 250–270 (AVLS…AFWC), and 315–335 (LSNV…WHAI).

The protein belongs to the PsbB/PsbC family. IsiA/Pcb subfamily. The antenna complex consists of divinyl chlorophylls (a and b) and divinyl chlorophyll a/b binding proteins and binds more divinyl chlorophyll b than does the antenna complex from high-light-adapted Prochlorococcus. Divinyl chlorophyll a is required as a cofactor. It depends on divinyl chlorophyll b as a cofactor.

It is found in the cellular thylakoid membrane. The antenna complex functions as a light receptor, it captures and delivers excitation energy to photosystems II and I. The Prochlorales pcb genes are not related to higher plant LHCs. In Prochlorococcus marinus (strain SARG / CCMP1375 / SS120), this protein is Divinyl chlorophyll a/b light-harvesting protein PcbE (pcbE).